We begin with the raw amino-acid sequence, 365 residues long: Serine protease 40 (365 aa).

The first 34 residues, 1–34, serve as a signal peptide directing secretion; the sequence is MCGIRAKKSGLGGYGAGLLAALLGVSFLSQHAQT. Asn44 carries an N-linked (GlcNAc...) asparagine glycan. A Peptidase S1 domain is found at 69-313; that stretch reads IYGGQIAGAE…FDKWIKDNKK (245 aa). Residues Cys94 and Cys110 are joined by a disulfide bond. Catalysis depends on charge relay system residues His109 and Asp159. Intrachain disulfides connect Cys193/Cys270, Cys226/Cys249, and Cys260/Cys288. Ser264 (charge relay system) is an active-site residue. Residues 312-343 are disordered; the sequence is KKSSSNSKPGESPHHPGSPENENPEGDNKNQG.

This sequence belongs to the peptidase S1 family. Expressed in testis. More specifically, abundantly expressed in the haploid round spermatid.

Its subcellular location is the cytoplasmic vesicle. It localises to the secretory vesicle. It is found in the acrosome. The protein localises to the secreted. In terms of biological role, may play an important role in the sperm/egg interaction; released during the acrosome reaction. This Mus musculus (Mouse) protein is Serine protease 40 (Prss40).